The chain runs to 178 residues: Large ribosomal subunit protein uL6 (178 aa).

This sequence belongs to the universal ribosomal protein uL6 family. Part of the 50S ribosomal subunit.

Its function is as follows. This protein binds to the 23S rRNA, and is important in its secondary structure. It is located near the subunit interface in the base of the L7/L12 stalk, and near the tRNA binding site of the peptidyltransferase center. The sequence is that of Large ribosomal subunit protein uL6 from Lactococcus lactis subsp. cremoris (strain SK11).